The chain runs to 145 residues: D-aminoacyl-tRNA deacylase (145 aa).

A Gly-cisPro motif, important for rejection of L-amino acids motif is present at residues 137–138; it reads GP.

Belongs to the DTD family. Homodimer.

The protein localises to the cytoplasm. The enzyme catalyses glycyl-tRNA(Ala) + H2O = tRNA(Ala) + glycine + H(+). It catalyses the reaction a D-aminoacyl-tRNA + H2O = a tRNA + a D-alpha-amino acid + H(+). An aminoacyl-tRNA editing enzyme that deacylates mischarged D-aminoacyl-tRNAs. Also deacylates mischarged glycyl-tRNA(Ala), protecting cells against glycine mischarging by AlaRS. Acts via tRNA-based rather than protein-based catalysis; rejects L-amino acids rather than detecting D-amino acids in the active site. By recycling D-aminoacyl-tRNA to D-amino acids and free tRNA molecules, this enzyme counteracts the toxicity associated with the formation of D-aminoacyl-tRNA entities in vivo and helps enforce protein L-homochirality. This chain is D-aminoacyl-tRNA deacylase, found in Carboxydothermus hydrogenoformans (strain ATCC BAA-161 / DSM 6008 / Z-2901).